The primary structure comprises 236 residues: 7-cyano-7-deazaguanine synthase 2 (236 aa).

Residue 11–21 (FSGGQDSATCL) coordinates ATP. 4 residues coordinate Zn(2+): Cys-199, Cys-214, Cys-217, and Cys-220.

The protein belongs to the QueC family. It depends on Zn(2+) as a cofactor.

The enzyme catalyses 7-carboxy-7-deazaguanine + NH4(+) + ATP = 7-cyano-7-deazaguanine + ADP + phosphate + H2O + H(+). It participates in purine metabolism; 7-cyano-7-deazaguanine biosynthesis. Catalyzes the ATP-dependent conversion of 7-carboxy-7-deazaguanine (CDG) to 7-cyano-7-deazaguanine (preQ(0)). The sequence is that of 7-cyano-7-deazaguanine synthase 2 from Sphingopyxis alaskensis (strain DSM 13593 / LMG 18877 / RB2256) (Sphingomonas alaskensis).